Reading from the N-terminus, the 221-residue chain is MEAGGVADSFLSSACVLFTLGMFSTGLSDLRHMQRTRSVDNIQFLPFLTTDVNNLGWLSYGVLKGDGTLIIVNTVGAVLQTLYILAYLHYSPQKHAVLLQTATLLAVLLLGYGYFWLLVPDLETRLQQLGLFCSVFTISMYLSPLADLAKIIQTKSTQRLSFSLTIATLLSSTSWSIYGFRLKDPYITVPNLPGILTGFIRLVLFYKYPPEQDTKYRLLQT.

A run of 7 helical transmembrane segments spans residues 3–23 (AGGV…LGMF), 44–63 (FLPF…YGVL), 68–88 (TLII…LAYL), 102–122 (ATLL…VPDL), 129–149 (LGLF…ADLA), 160–180 (LSFS…IYGF), and 186–206 (YITV…VLFY). Residues 10–94 (FLSSACVLFT…LAYLHYSPQK (85 aa)) enclose the MtN3/slv 1 domain. The region spanning 127–212 (QQLGLFCSVF…VLFYKYPPEQ (86 aa)) is the MtN3/slv 2 domain. The tract at residues 149 to 221 (AKIIQTKSTQ…QDTKYRLLQT (73 aa)) is mediates interaction with TRPV2.

This sequence belongs to the SWEET sugar transporter family. As to quaternary structure, interacts with TRPV2; the interaction probably occurs intracellularly and depends on TRPV2 N-glycosylation.

It localises to the golgi apparatus membrane. The protein localises to the cell membrane. Its function is as follows. Mediates sugar transport across membranes. May stimulate V(D)J recombination by the activation of RAG1. This Rattus norvegicus (Rat) protein is Sugar transporter SWEET1 (Slc50a1).